Here is a 208-residue protein sequence, read N- to C-terminus: Large ribosomal subunit protein uL3 (208 aa).

The interval 124–146 (HGQSRGPMAHGSRYHRRPGSMGP) is disordered.

It belongs to the universal ribosomal protein uL3 family. In terms of assembly, part of the 50S ribosomal subunit. Forms a cluster with proteins L14 and L19.

Functionally, one of the primary rRNA binding proteins, it binds directly near the 3'-end of the 23S rRNA, where it nucleates assembly of the 50S subunit. This is Large ribosomal subunit protein uL3 from Streptococcus thermophilus (strain ATCC BAA-491 / LMD-9).